The sequence spans 541 residues: 2-succinyl-5-enolpyruvyl-6-hydroxy-3-cyclohexene-1-carboxylate synthase (541 aa).

This sequence belongs to the TPP enzyme family. MenD subfamily. As to quaternary structure, homodimer. Requires Mg(2+) as cofactor. Mn(2+) serves as cofactor. It depends on thiamine diphosphate as a cofactor.

It catalyses the reaction isochorismate + 2-oxoglutarate + H(+) = 5-enolpyruvoyl-6-hydroxy-2-succinyl-cyclohex-3-ene-1-carboxylate + CO2. It participates in quinol/quinone metabolism; 1,4-dihydroxy-2-naphthoate biosynthesis; 1,4-dihydroxy-2-naphthoate from chorismate: step 2/7. The protein operates within quinol/quinone metabolism; menaquinone biosynthesis. Its function is as follows. Catalyzes the thiamine diphosphate-dependent decarboxylation of 2-oxoglutarate and the subsequent addition of the resulting succinic semialdehyde-thiamine pyrophosphate anion to isochorismate to yield 2-succinyl-5-enolpyruvyl-6-hydroxy-3-cyclohexene-1-carboxylate (SEPHCHC). The sequence is that of 2-succinyl-5-enolpyruvyl-6-hydroxy-3-cyclohexene-1-carboxylate synthase from Rhodococcus jostii (strain RHA1).